The chain runs to 484 residues: Cobyric acid synthase (484 aa).

A GATase cobBQ-type domain is found at 248-435 (VLKVIVPVLP…LHGLFEGSQS (188 aa)). C329 serves as the catalytic Nucleophile. Residue H427 is part of the active site.

This sequence belongs to the CobB/CobQ family. CobQ subfamily.

Its pathway is cofactor biosynthesis; adenosylcobalamin biosynthesis. In terms of biological role, catalyzes amidations at positions B, D, E, and G on adenosylcobyrinic A,C-diamide. NH(2) groups are provided by glutamine, and one molecule of ATP is hydrogenolyzed for each amidation. This chain is Cobyric acid synthase, found in Pseudomonas putida (strain W619).